Consider the following 214-residue polypeptide: Octanoyltransferase (214 aa).

The region spanning 35–211 (KSNIDFIWLG…IIQEEFYFNF (177 aa)) is the BPL/LPL catalytic domain. Residues 75 to 82 (RGGEVTCH), 142 to 144 (SIG), and 155 to 157 (GFS) contribute to the substrate site. Residue cysteine 173 is the Acyl-thioester intermediate of the active site.

Belongs to the LipB family.

Its subcellular location is the cytoplasm. The catalysed reaction is octanoyl-[ACP] + L-lysyl-[protein] = N(6)-octanoyl-L-lysyl-[protein] + holo-[ACP] + H(+). Its pathway is protein modification; protein lipoylation via endogenous pathway; protein N(6)-(lipoyl)lysine from octanoyl-[acyl-carrier-protein]: step 1/2. In terms of biological role, catalyzes the transfer of endogenously produced octanoic acid from octanoyl-acyl-carrier-protein onto the lipoyl domains of lipoate-dependent enzymes. Lipoyl-ACP can also act as a substrate although octanoyl-ACP is likely to be the physiological substrate. In Prochlorococcus marinus (strain MIT 9515), this protein is Octanoyltransferase.